The following is a 669-amino-acid chain: MSKEIAKKRIEELRDLLNTFNYQYHVLDNPSVSDAEYDRNMQELIKLEAENPEFMSEDSPSVRVGGTVLDIFEKVTHKSPMLSLGNAFNEGDLRDFDRRVRQGIDDANVRYICELKIDGLAVSLHYEKGRFIQGATRGDGVTGEDITQNLKTIKAIPLRLNEEVTLEARGEAYMPKRSFVKLNEEKEQNGEDVFANPRNAAAGSIRQLDPKIAAKRNLSMFVYGLANVEEKTIPSHSESLDFLGELGFKTNPNRRTCETIEEVIAYVEEWQEKRPHLDYEIDGIVIKVDDVALQESLGTTAKSPRWAIAYKFPAEEVVTRLTGIELSVGRTGVVTPTAELEPVRVAGTIVRRASLHNEDLIREKDIRIGDYVVVKKAGDIIPEVVNVIFDKRTGEEEEYHMPTHCPACESELVRLEEEVALRCINPTCPAQIREGLIHFVSRNAMNIDGLGERVITQLFDADYIRTFADLYSLTKEQLLQLERFGEKSATNLVQAIENSKENSLERLLFGLGIRHVGAKAARTFAEHFETMDALVKATEEELKTINEIGEKMAQSVVAYFDNEDVLELLQQFKEYGVNMTYKGIKIADLQNVESYFAGKTVVLTGKLEVMGRSEAKKKIEALGGKVTGSVSKSTDLVVAGEAAGSKLAQAEKHNVEVWNEERFLQELNK.

Residues 34–38, 83–84, and Glu114 each bind NAD(+); these read DAEYD and SL. Catalysis depends on Lys116, which acts as the N6-AMP-lysine intermediate. Arg137, Glu171, Lys287, and Lys311 together coordinate NAD(+). Residues Cys405, Cys408, Cys423, and Cys428 each contribute to the Zn(2+) site. Residues 591 to 669 form the BRCT domain; sequence NVESYFAGKT…EERFLQELNK (79 aa).

It belongs to the NAD-dependent DNA ligase family. LigA subfamily. The cofactor is Mg(2+). It depends on Mn(2+) as a cofactor.

The enzyme catalyses NAD(+) + (deoxyribonucleotide)n-3'-hydroxyl + 5'-phospho-(deoxyribonucleotide)m = (deoxyribonucleotide)n+m + AMP + beta-nicotinamide D-nucleotide.. Its function is as follows. DNA ligase that catalyzes the formation of phosphodiester linkages between 5'-phosphoryl and 3'-hydroxyl groups in double-stranded DNA using NAD as a coenzyme and as the energy source for the reaction. It is essential for DNA replication and repair of damaged DNA. The sequence is that of DNA ligase from Bacillus cereus (strain ZK / E33L).